A 292-amino-acid chain; its full sequence is tRNA-cytidine(32) 2-sulfurtransferase (292 aa).

The short motif at 62–67 (SGGKDS) is the PP-loop motif element. [4Fe-4S] cluster contacts are provided by C137, C140, and C228.

It belongs to the TtcA family. In terms of assembly, homodimer. Requires Mg(2+) as cofactor. [4Fe-4S] cluster serves as cofactor.

Its subcellular location is the cytoplasm. The enzyme catalyses cytidine(32) in tRNA + S-sulfanyl-L-cysteinyl-[cysteine desulfurase] + AH2 + ATP = 2-thiocytidine(32) in tRNA + L-cysteinyl-[cysteine desulfurase] + A + AMP + diphosphate + H(+). It functions in the pathway tRNA modification. Functionally, catalyzes the ATP-dependent 2-thiolation of cytidine in position 32 of tRNA, to form 2-thiocytidine (s(2)C32). The sulfur atoms are provided by the cysteine/cysteine desulfurase (IscS) system. This Brucella anthropi (strain ATCC 49188 / DSM 6882 / CCUG 24695 / JCM 21032 / LMG 3331 / NBRC 15819 / NCTC 12168 / Alc 37) (Ochrobactrum anthropi) protein is tRNA-cytidine(32) 2-sulfurtransferase.